Here is a 227-residue protein sequence, read N- to C-terminus: Probable GTP-binding protein EngB (227 aa).

In terms of domain architecture, EngB-type G spans 41-216 (GRPEVAFAGR…RAEIARFAVP (176 aa)). Residues 49-56 (GRSNVGKS), 76-80 (GRTKQ), 94-97 (DMPG), 161-164 (TKCD), and 195-197 (TSS) each bind GTP. Residues Ser56 and Thr78 each coordinate Mg(2+).

Belongs to the TRAFAC class TrmE-Era-EngA-EngB-Septin-like GTPase superfamily. EngB GTPase family. The cofactor is Mg(2+).

Functionally, necessary for normal cell division and for the maintenance of normal septation. The protein is Probable GTP-binding protein EngB of Gluconobacter oxydans (strain 621H) (Gluconobacter suboxydans).